Consider the following 184-residue polypeptide: GTP cyclohydrolase 1 (184 aa).

Positions 75, 78, and 146 each coordinate Zn(2+).

It belongs to the GTP cyclohydrolase I family. Homomer.

It catalyses the reaction GTP + H2O = 7,8-dihydroneopterin 3'-triphosphate + formate + H(+). It participates in cofactor biosynthesis; 7,8-dihydroneopterin triphosphate biosynthesis; 7,8-dihydroneopterin triphosphate from GTP: step 1/1. This Finegoldia magna (strain ATCC 29328 / DSM 20472 / WAL 2508) (Peptostreptococcus magnus) protein is GTP cyclohydrolase 1.